The sequence spans 711 residues: Protein Smaug homolog 1 (711 aa).

A Phosphoserine modification is found at S168. The interval 278–323 is disordered; the sequence is ARGPQCLPSDHAPLSPQSSVASSGSGGSEHLEDQTTARNTFQEEGS. Positions 323-396 constitute an SAM domain; the sequence is SGMKDVPAWL…LKSLERDIIE (74 aa). A Phosphoserine modification is found at S420. Disordered stretches follow at residues 422–448 and 565–588; these read STTPEVRCREPSLMESPSPDCKDSAAA and NRGFGQSNSLPTASSVGSGMGRRN. At T424 the chain carries Phosphothreonine. R566 is subject to Omega-N-methylarginine. Residues 568–581 are compositionally biased toward polar residues; the sequence is FGQSNSLPTASSVG. At S573 the chain carries Phosphoserine.

This sequence belongs to the SMAUG family. As to expression, expressed in brain (at protein level).

It localises to the cytoplasm. The protein resides in the cell projection. The protein localises to the dendrite. It is found in the synapse. Its subcellular location is the synaptosome. Functionally, acts as a translational repressor of SRE-containing messengers. The chain is Protein Smaug homolog 1 (Samd4a) from Mus musculus (Mouse).